The following is a 264-amino-acid chain: Major prion protein (264 aa).

Residues 1–24 form the signal peptide; the sequence is MVKSHIGSWILVLFVAMWSDVGLC. The segment at 25-241 is interaction with GRB2, ERI3 and SYN1; the sequence is KKRPKPGGGW…ESEAYYQRGA (217 aa). The interval 28–118 is disordered; it reads PKPGGGWNTG…QWNKPSKPKT (91 aa). 6 consecutive repeat copies span residues 54–62, 63–70, 71–78, 79–86, 87–94, and 95–103. A 6 X 8 AA tandem repeats of P-H-G-G-G-W-G-Q region spans residues 54–103; sequence SQGGGGWGQPHGGGWGQPHGGGWGQPHGGGWGQPHGGGWGQPHGGGGWGQ. The segment covering 55-107 has biased composition (gly residues); it reads QGGGGWGQPHGGGWGQPHGGGWGQPHGGGWGQPHGGGWGQPHGGGGWGQGGTH. Positions 72, 73, 74, 80, 81, 82, 88, 89, 90, 96, 98, and 99 each coordinate Cu(2+). A disulfide bridge connects residues C190 and C225. N-linked (GlcNAc...) asparagine glycans are attached at residues N192 and N208. A241 is lipidated: GPI-anchor amidated alanine. Positions 242-264 are cleaved as a propeptide — removed in mature form; the sequence is SVILFSSPPVILLISFLIFLIVG.

Belongs to the prion family. Monomer and homodimer. Has a tendency to aggregate into amyloid fibrils containing a cross-beta spine, formed by a steric zipper of superposed beta-strands. Soluble oligomers may represent an intermediate stage on the path to fibril formation. Copper binding may promote oligomerization. Interacts with GRB2, APP, ERI3/PRNPIP and SYN1. Mislocalized cytosolically exposed PrP interacts with MGRN1; this interaction alters MGRN1 subcellular location and causes lysosomal enlargement. Interacts with KIAA1191.

The protein resides in the cell membrane. It is found in the golgi apparatus. Functionally, its primary physiological function is unclear. Has cytoprotective activity against internal or environmental stresses. May play a role in neuronal development and synaptic plasticity. May be required for neuronal myelin sheath maintenance. May play a role in iron uptake and iron homeostasis. Soluble oligomers are toxic to cultured neuroblastoma cells and induce apoptosis (in vitro). Association with GPC1 (via its heparan sulfate chains) targets PRNP to lipid rafts. Also provides Cu(2+) or Zn(2+) for the ascorbate-mediated GPC1 deaminase degradation of its heparan sulfate side chains. In Tragelaphus imberbis (Lesser kudu), this protein is Major prion protein (PRNP).